The following is a 283-amino-acid chain: 1D-myo-inositol 2-acetamido-2-deoxy-alpha-D-glucopyranoside deacetylase (283 aa).

Residues histidine 15, aspartate 18, and histidine 150 each contribute to the Zn(2+) site.

Belongs to the MshB deacetylase family. Zn(2+) is required as a cofactor.

The catalysed reaction is 1D-myo-inositol 2-acetamido-2-deoxy-alpha-D-glucopyranoside + H2O = 1D-myo-inositol 2-amino-2-deoxy-alpha-D-glucopyranoside + acetate. Its function is as follows. Catalyzes the deacetylation of 1D-myo-inositol 2-acetamido-2-deoxy-alpha-D-glucopyranoside (GlcNAc-Ins) in the mycothiol biosynthesis pathway. The polypeptide is 1D-myo-inositol 2-acetamido-2-deoxy-alpha-D-glucopyranoside deacetylase (Actinosynnema mirum (strain ATCC 29888 / DSM 43827 / JCM 3225 / NBRC 14064 / NCIMB 13271 / NRRL B-12336 / IMRU 3971 / 101)).